A 290-amino-acid polypeptide reads, in one-letter code: MNFEYIINSLLETIKTYNFFVDWEKIENNIKKIEKRLHILNYLIGKENFKEEFFELLKEYPEVITVFPILIAVRDNKITILNENMELETLEFKEKKYLTDEEIERYYKFFKETGLEDLLKNRKIKNLVDYVFGVEVGMDTNARKNRIGDLMENIVKKYIENLCKQNKNLDYIFQATKDKIKQKWGINLTLDKTNRKFDFAVFNKNTKKLYLIEVNFYSGGGSKLKATAGEYRSLNEFIKNNNNNVQFIWITDGKGWNTAKNPLKESFNSGVVILNLKMVKEGLLKEILTQ.

It belongs to the DpnII type II restriction endonuclease family.

It catalyses the reaction Endonucleolytic cleavage of DNA to give specific double-stranded fragments with terminal 5'-phosphates.. A P subtype restriction enzyme that recognizes the double-stranded sequence 5'-GATC-3'; the cleavage site is unknown. This chain is Type II restriction enzyme MjaIII (mjaIIIR), found in Methanocaldococcus jannaschii (strain ATCC 43067 / DSM 2661 / JAL-1 / JCM 10045 / NBRC 100440) (Methanococcus jannaschii).